We begin with the raw amino-acid sequence, 375 residues long: Alcohol dehydrogenase 1 (375 aa).

Position 2 is an N-acetylserine (serine 2). Zn(2+) is bound by residues cysteine 47, histidine 68, cysteine 98, cysteine 101, cysteine 104, cysteine 112, and cysteine 175. NAD(+) contacts are provided by residues 200 to 205, aspartate 224, and lysine 229; that span reads WSGRVG. An N6-succinyllysine modification is found at lysine 234. 293–295 serves as a coordination point for NAD(+); the sequence is VGV. An N6-succinyllysine modification is found at lysine 340. Arginine 370 contacts NAD(+).

It belongs to the zinc-containing alcohol dehydrogenase family. Class-I subfamily. Homodimer. Zn(2+) serves as cofactor.

Its subcellular location is the cytoplasm. The catalysed reaction is a primary alcohol + NAD(+) = an aldehyde + NADH + H(+). The enzyme catalyses a secondary alcohol + NAD(+) = a ketone + NADH + H(+). The sequence is that of Alcohol dehydrogenase 1 (ADH1) from Geomys knoxjonesi (Jones' pocket gopher).